The following is a 670-amino-acid chain: Probable membrane-anchored ferredoxin csal_0991 (670 aa).

5 consecutive transmembrane segments (helical) span residues 2-22 (LDILLPILIFSALALAAIGAV), 68-90 (VATAGGFVAAMGLAIVVHGLGLA), 94-113 (LGWLLLAASATMFAGSLFVA), 135-155 (LMAFSLGIFVVTLPAVGVLPA), and 159-179 (GWLVALVLAAVVAWGLAELVF). 4Fe-4S ferredoxin-type domains lie at 241–271 (WNQLLGFDACVQCGRCEAVCPAFAAGQPLNP) and 316–347 (GTALVDAETLWSCTTCRACVEECPMMIEHVDA). Positions 250, 253, 256, 260, 328, 331, 334, and 338 each coordinate [4Fe-4S] cluster. The disordered stretch occupies residues 648–670 (NTPPATPASHDTAASQATEEVLS). Residues 659 to 670 (TAASQATEEVLS) show a composition bias toward polar residues.

[4Fe-4S] cluster serves as cofactor.

It localises to the cell inner membrane. In terms of biological role, participates in the electron transfer process during N,N-dimethylglycine (DMG) degradation to sarcosine. Probably transfers the electrons from N,N-dimethylglycine/sarcosine dehydrogenase (DMGDH) to the electron transfer flavoprotein (ETF) EtfA-EtfB. The polypeptide is Probable membrane-anchored ferredoxin csal_0991 (Chromohalobacter salexigens (strain ATCC BAA-138 / DSM 3043 / CIP 106854 / NCIMB 13768 / 1H11)).